Reading from the N-terminus, the 136-residue chain is Large ribosomal subunit protein uL16 (136 aa).

The protein belongs to the universal ribosomal protein uL16 family. In terms of assembly, part of the 50S ribosomal subunit.

Binds 23S rRNA and is also seen to make contacts with the A and possibly P site tRNAs. This Shewanella halifaxensis (strain HAW-EB4) protein is Large ribosomal subunit protein uL16.